The sequence spans 137 residues: Large ribosomal subunit protein eL28 (137 aa).

At Ser-2 the chain carries N-acetylserine. Residues Lys-58 and Lys-65 each participate in a glycyl lysine isopeptide (Lys-Gly) (interchain with G-Cter in SUMO2) cross-link. Position 115 is a phosphoserine (Ser-115).

It belongs to the eukaryotic ribosomal protein eL28 family. Component of the large ribosomal subunit.

The protein localises to the cytoplasm. Its function is as follows. Component of the large ribosomal subunit. The ribosome is a large ribonucleoprotein complex responsible for the synthesis of proteins in the cell. The chain is Large ribosomal subunit protein eL28 (RPL28) from Homo sapiens (Human).